A 336-amino-acid chain; its full sequence is UDP-3-O-acylglucosamine N-acyltransferase (336 aa).

His233 serves as the catalytic Proton acceptor.

This sequence belongs to the transferase hexapeptide repeat family. LpxD subfamily. As to quaternary structure, homotrimer.

The enzyme catalyses a UDP-3-O-[(3R)-3-hydroxyacyl]-alpha-D-glucosamine + a (3R)-hydroxyacyl-[ACP] = a UDP-2-N,3-O-bis[(3R)-3-hydroxyacyl]-alpha-D-glucosamine + holo-[ACP] + H(+). It participates in bacterial outer membrane biogenesis; LPS lipid A biosynthesis. Its function is as follows. Catalyzes the N-acylation of UDP-3-O-acylglucosamine using 3-hydroxyacyl-ACP as the acyl donor. Is involved in the biosynthesis of lipid A, a phosphorylated glycolipid that anchors the lipopolysaccharide to the outer membrane of the cell. The chain is UDP-3-O-acylglucosamine N-acyltransferase from Helicobacter pylori (strain ATCC 700392 / 26695) (Campylobacter pylori).